Reading from the N-terminus, the 580-residue chain is NADH-quinone oxidoreductase subunit C/D (580 aa).

Positions 1-171 are NADH dehydrogenase I subunit C; the sequence is MSLDQAIPEA…PPFVLTDRLF (171 aa). The interval 195–580 is NADH dehydrogenase I subunit D; it reads ELMVLNFGPH…IDFVMSDVDR (386 aa).

In the N-terminal section; belongs to the complex I 30 kDa subunit family. It in the C-terminal section; belongs to the complex I 49 kDa subunit family. NDH-1 is composed of 13 different subunits. Subunits NuoB, CD, E, F, and G constitute the peripheral sector of the complex.

Its subcellular location is the cell inner membrane. It catalyses the reaction a quinone + NADH + 5 H(+)(in) = a quinol + NAD(+) + 4 H(+)(out). Functionally, NDH-1 shuttles electrons from NADH, via FMN and iron-sulfur (Fe-S) centers, to quinones in the respiratory chain. The immediate electron acceptor for the enzyme in this species is believed to be ubiquinone. Couples the redox reaction to proton translocation (for every two electrons transferred, four hydrogen ions are translocated across the cytoplasmic membrane), and thus conserves the redox energy in a proton gradient. This Cereibacter sphaeroides (strain ATCC 17029 / ATH 2.4.9) (Rhodobacter sphaeroides) protein is NADH-quinone oxidoreductase subunit C/D.